Here is a 119-residue protein sequence, read N- to C-terminus: Large ribosomal subunit protein eL31 (119 aa).

It belongs to the eukaryotic ribosomal protein eL31 family.

The chain is Large ribosomal subunit protein eL31 (RPL31) from Cyanophora paradoxa.